The following is a 243-amino-acid chain: Uridylate kinase (243 aa).

18 to 21 (KLGG) provides a ligand contact to ATP. Glycine 59 is a binding site for UMP. 2 residues coordinate ATP: glycine 60 and arginine 64. UMP-binding positions include aspartate 79 and 140 to 147 (MGMPYFST). ATP is bound by residues tyrosine 173 and aspartate 176.

It belongs to the UMP kinase family. As to quaternary structure, homohexamer.

The protein localises to the cytoplasm. It carries out the reaction UMP + ATP = UDP + ADP. It functions in the pathway pyrimidine metabolism; CTP biosynthesis via de novo pathway; UDP from UMP (UMPK route): step 1/1. With respect to regulation, inhibited by UTP. Its function is as follows. Catalyzes the reversible phosphorylation of UMP to UDP. This Corynebacterium diphtheriae (strain ATCC 700971 / NCTC 13129 / Biotype gravis) protein is Uridylate kinase.